The primary structure comprises 304 residues: tRNA pseudouridine synthase B (304 aa).

The Nucleophile role is filled by D38.

The protein belongs to the pseudouridine synthase TruB family. Type 1 subfamily.

It carries out the reaction uridine(55) in tRNA = pseudouridine(55) in tRNA. Its function is as follows. Responsible for synthesis of pseudouridine from uracil-55 in the psi GC loop of transfer RNAs. The protein is tRNA pseudouridine synthase B of Listeria welshimeri serovar 6b (strain ATCC 35897 / DSM 20650 / CCUG 15529 / CIP 8149 / NCTC 11857 / SLCC 5334 / V8).